A 129-amino-acid polypeptide reads, in one-letter code: Short-chain dehydrogenase/reductase homolog YusR (129 aa).

This sequence belongs to the short-chain dehydrogenases/reductases (SDR) family.

This chain is Short-chain dehydrogenase/reductase homolog YusR (yusR), found in Bacillus subtilis (strain 168).